The primary structure comprises 502 residues: Probable cytosol aminopeptidase (502 aa).

Lys-269 and Asp-274 together coordinate Mn(2+). Lys-281 is an active-site residue. Mn(2+) contacts are provided by Asp-292, Asp-351, and Glu-353. The active site involves Arg-355.

It belongs to the peptidase M17 family. Mn(2+) serves as cofactor.

The protein localises to the cytoplasm. The enzyme catalyses Release of an N-terminal amino acid, Xaa-|-Yaa-, in which Xaa is preferably Leu, but may be other amino acids including Pro although not Arg or Lys, and Yaa may be Pro. Amino acid amides and methyl esters are also readily hydrolyzed, but rates on arylamides are exceedingly low.. It carries out the reaction Release of an N-terminal amino acid, preferentially leucine, but not glutamic or aspartic acids.. Its function is as follows. Presumably involved in the processing and regular turnover of intracellular proteins. Catalyzes the removal of unsubstituted N-terminal amino acids from various peptides. This is Probable cytosol aminopeptidase from Photobacterium profundum (strain SS9).